Here is a 300-residue protein sequence, read N- to C-terminus: uncharacterized protein (300 aa).

Residues 67–179 are a coiled coil; the sequence is LAFEELEKEK…IAKANELKDS (113 aa). Residues 203 to 285 show a composition bias toward low complexity; sequence STTASLSQSE…PSSQSTYQQQ (83 aa). The disordered stretch occupies residues 203–300; it reads STTASLSQSE…KGFFARLFNL (98 aa).

This is an uncharacterized protein from Staphylococcus epidermidis (strain ATCC 12228 / FDA PCI 1200).